The primary structure comprises 66 residues: Large ribosomal subunit protein bL31 (66 aa).

The Zn(2+) site is built by C16, C18, C36, and C39.

It belongs to the bacterial ribosomal protein bL31 family. Type A subfamily. In terms of assembly, part of the 50S ribosomal subunit. Requires Zn(2+) as cofactor.

In terms of biological role, binds the 23S rRNA. This Nitratiruptor sp. (strain SB155-2) protein is Large ribosomal subunit protein bL31.